The sequence spans 890 residues: Pentatricopeptide repeat-containing protein At3g57430, chloroplastic (890 aa).

Residues 1 to 44 (MSCPLAFTFSLPSIFPFPSQLLPFSRHKHPYLLRATPTSATEDV) constitute a chloroplast transit peptide. PPR repeat units lie at residues 61–95 (SPEW…GIKP), 96–130 (DNYA…GYGV), 132–162 (SVTV…ISER), 163–197 (NQVS…NVEP), 198–231 (SSFT…GLRK), 235–265 (NSFI…FGGR), 266–300 (DLVT…GVEP), 301–335 (DEFT…GSLD), 337–371 (NSFV…KIGL), 372–398 (WNAM…MEES), 404–438 (NSTT…GLDR), 439–473 (DRFV…DLVT), 474–504 (WNTM…ERKV), 516–550 (NSIT…NLAT), 551–581 (DVAV…IPQK), 582–616 (NVIT…GVKP), 617–652 (NEVT…GVEP), and 653–683 (SSDH…MPRD). The segment at 689 to 764 (AWSSLLGASR…EPGCSWIEHG (76 aa)) is type E motif. Residues 765–795 (DEVHKFVAGDSSHPQSEKLSGYLETLWERMR) form a type E(+) motif region. The type DYW motif stretch occupies residues 796-890 (KEGYVPDTSC…NGTCSCGDYW (95 aa)).

This sequence belongs to the PPR family. PCMP-H subfamily.

The protein resides in the plastid. Its subcellular location is the chloroplast. Functionally, involved in RNA editing events in chloroplasts. Required for the editing of a single site in ndhB and ndhF transcripts, which are two plastid-encoded subunits of the chloroplast NAD(P)H dehydrogenase (NDH) complex. Required for the editing of a single site in psbZ. Required for optimal activity of the NDH complex of the photosynthetic electron transport chain. This chain is Pentatricopeptide repeat-containing protein At3g57430, chloroplastic (PCMP-H81), found in Arabidopsis thaliana (Mouse-ear cress).